Here is a 580-residue protein sequence, read N- to C-terminus: Anaphase-promoting complex subunit 7 (580 aa).

10 TPR repeats span residues 50–83 (IISF…LFKV), 107–140 (YELK…SRGL), 141–175 (DTHL…CPLC), 253–286 (VLEK…DPYY), 321–354 (AETW…KESH), 356–388 (FAHS…SKNI), 390–421 (TARE…SPDY), 422–456 (SKTM…SPHC), 458–490 (DTVL…QETD), and 491–523 (LMHT…NPQY). Residues 539–580 (GIDPDQELDQENDDDDQEEGEGENDQEENDDDDNDDDDEYIS) form a disordered region. Over residues 542–580 (PDQELDQENDDDDQEEGEGENDQEENDDDDNDDDDEYIS) the composition is skewed to acidic residues.

This sequence belongs to the APC7 family. In terms of assembly, the APC/C is composed of at least 13 subunits that stay tightly associated throughout the cell cycle: anapc1, anapc2, anapc3, anapc4, anapc5, anapc6, anapc7, anapc8, anapc10, anapc11, cdc20, cdc26 and cdh1.

Its subcellular location is the nucleus. The protein operates within protein modification; protein ubiquitination. Component of the anaphase promoting complex/cyclosome (APC/C), a cell cycle-regulated E3 ubiquitin-protein ligase complex that controls progression through mitosis and the G1 phase of the cell cycle. The chain is Anaphase-promoting complex subunit 7 (anapc7) from Dictyostelium discoideum (Social amoeba).